The primary structure comprises 710 residues: Solute carrier family 15 member 1 (710 aa).

The chain crosses the membrane as a helical span at residues 1-21 (MGMSKSRGCFGYPLSIFFIVV). Residues 22–53 (NEFCERFSYYGMRALLVLYFRNFLGWDDDLST) lie on the Extracellular side of the membrane. The helical transmembrane segment at 54-74 (AIYHTFVALCYLTPILGALIA) threads the bilayer. At 75-82 (DSWLGKFK) the chain is on the cytoplasmic side. The helical transmembrane segment at 83–103 (TIVSLSIVYTIGQAVISVSSI) threads the bilayer. Topologically, residues 104–118 (NDLTDHDHDGSPNNL) are extracellular. The chain crosses the membrane as a helical span at residues 119–139 (PLHVALSMIGLALIALGTGGI). The Cytoplasmic portion of the chain corresponds to 140–161 (KPCVSAFGGDQFEEGQEKQRNR). A helical transmembrane segment spans residues 162 to 182 (FFSIFYLAINAGSLLSTIITP). Topologically, residues 183–198 (ILRVQQCGIHSQQACY) are extracellular. A helical membrane pass occupies residues 199–219 (PLAFGVPAALMAVALIVFVLG). Over 220–276 (SGMYKKFQPQGNIMGKVAKCIRFAIKNRFRHRSKAFPKRNHWLDWAKEKYDERLISQ) the chain is Cytoplasmic. A helical membrane pass occupies residues 277 to 297 (IKIMTKVMFLYIPLPMFWALF). The Extracellular portion of the chain corresponds to 298 to 327 (DQQGSRWTLQATTMTGKIGTIEIQPDQMQT). Residues 328–348 (VNAILIVIMVPIVDAVVYPLI) traverse the membrane as a helical segment. Topologically, residues 349 to 361 (AKCGFNFTSLKKM) are cytoplasmic. The helical transmembrane segment at 362-382 (TVGMFLASMAFVVAAIVQVEI) threads the bilayer. Residues 383 to 586 (DKTLPVFPSG…PPNTVNMALQ (204 aa)) lie on the Extracellular side of the membrane. An extracellular domain (ECD) region spans residues 383–586 (DKTLPVFPSG…PPNTVNMALQ (204 aa)). N-linked (GlcNAc...) asparagine glycosylation is found at Asn415, Asn439, Asn510, Asn532, and Asn539. Residues 587–607 (IPQYFLLTCGEVVFSVTGLEF) form a helical membrane-spanning segment. Topologically, residues 608–621 (SYSQAPSNMKSVLQ) are cytoplasmic. The helical transmembrane segment at 622 to 642 (AGWLLTVAIGNIIVLIVAEAG) threads the bilayer. Residues 643–647 (HFDKQ) are Extracellular-facing. Residues 648 to 668 (WAEYVLFASLLLVVCIIFAIM) traverse the membrane as a helical segment. The Cytoplasmic segment spans residues 669–710 (ARFYTYINPAEIEAQFDEDEKKKGVGKENPYSSLEPVSQTNM). Positions 687 to 710 (DEKKKGVGKENPYSSLEPVSQTNM) are disordered. Over residues 698–710 (PYSSLEPVSQTNM) the composition is skewed to polar residues.

It belongs to the major facilitator superfamily. Proton-dependent oligopeptide transporter (POT/PTR) (TC 2.A.17) family. Interacts (via extracellular domain region) with trypsin. In terms of tissue distribution, highly expressed in small intestine. As to expression, expression is restricted to pinealocytes.

Its subcellular location is the apical cell membrane. It carries out the reaction a dipeptide(out) + H(+)(out) = a dipeptide(in) + H(+)(in). The enzyme catalyses an L-amino acid tripeptide(out) + H(+)(out) = an L-amino acid tripeptide(in) + H(+)(in). The catalysed reaction is L-alanyl-L-lysine(out) + H(+)(out) = L-alanyl-L-lysine(in) + H(+)(in). It catalyses the reaction L-alanyl-L-proline(out) + H(+)(out) = L-alanyl-L-proline(in) + H(+)(in). It carries out the reaction L-alanyl-L-valine(out) + H(+)(out) = L-alanyl-L-valine(in) + H(+)(in). The enzyme catalyses carnosine(out) + H(+)(out) = carnosine(in) + H(+)(in). The catalysed reaction is glycyl-L-glutamine(out) + H(+)(out) = glycyl-L-glutamine(in) + H(+)(in). It catalyses the reaction glycyl-L-leucine(out) + H(+)(out) = glycyl-L-leucine(in) + H(+)(in). It carries out the reaction glycyl-L-proline(out) + H(+)(out) = glycyl-L-proline(in) + H(+)(in). The enzyme catalyses glycyl-sarcosine(out) + H(+)(out) = glycyl-sarcosine(in) + H(+)(in). The catalysed reaction is L-leucyl-L-leucine(out) + H(+)(out) = L-leucyl-L-leucine(in) + H(+)(in). It catalyses the reaction L-leucyl-L-proline(out) + H(+)(out) = L-leucyl-L-proline(in) + H(+)(in). It carries out the reaction L-phenylalanyl-L-leucine(out) + H(+)(out) = L-phenylalanyl-L-leucine(in) + H(+)(in). The enzyme catalyses L-phenylalanyl-L-phenylalanine(out) + H(+)(out) = L-phenylalanyl-L-phenylalanine(in) + H(+)(in). The catalysed reaction is L-lysyl-glycine(out) + H(+)(out) = L-lysyl-glycine(in) + H(+)(in). It catalyses the reaction L-tyrosylglycine(out) + H(+)(out) = L-tyrosylglycine(in) + H(+)(in). It carries out the reaction L-alanyl-L-aspartate(out) + 2 H(+)(out) = L-alanyl-L-aspartate(in) + 2 H(+)(in). The enzyme catalyses L-aspartyl-glycine(out) + 2 H(+)(out) = L-aspartyl-glycine(in) + 2 H(+)(in). The catalysed reaction is glycyl-L-aspartate(out) + 2 H(+)(out) = glycyl-L-aspartate(in) + 2 H(+)(in). It catalyses the reaction glycyl-L-glutamate(out) + 2 H(+)(out) = glycyl-L-glutamate(in) + 2 H(+)(in). It carries out the reaction L-alanyl-L-leucyl-L-alanine(out) + H(+)(out) = L-alanyl-L-leucyl-L-alanine(in) + H(+)(in). The enzyme catalyses L-alanyl-L-prolylglycine(out) + H(+)(out) = L-alanyl-L-prolylglycine(in) + H(+)(in). The catalysed reaction is glycylglycyl-L-isoleucine(out) + H(+)(out) = glycylglycyl-L-isoleucine(in) + H(+)(in). It catalyses the reaction glycylglycyl-L-proline(out) + H(+)(out) = glycylglycyl-L-proline(in) + H(+)(in). It carries out the reaction L-methionyl-L-phenylalanyl-L-methionine(out) + H(+)(out) = L-methionyl-L-phenylalanyl-L-methionine(in) + H(+)(in). The enzyme catalyses N-acetyl-D-muramoyl-L-alanyl-D-isoglutamine(out) + 2 H(+)(out) = N-acetyl-D-muramoyl-L-alanyl-D-isoglutamine(in) + 2 H(+)(in). The catalysed reaction is N(alpha)-formyl-L-methionyl-L-leucyl-L-phenylalanine(out) + 2 H(+)(out) = N(alpha)-formyl-L-methionyl-L-leucyl-L-phenylalanine(in) + 2 H(+)(in). Functionally, electrogenic proton-coupled amino-acid transporter that transports oligopeptides of 2 to 4 amino acids with a preference for dipeptides. Transports neutral and monovalently charged peptides with a proton to peptide stoichiometry of 1:1 or 2:1. Primarily responsible for the absorption of dietary di- and tripeptides from the small intestinal lumen. Mediates transepithelial transport of muramyl and N-formylated bacterial dipeptides contributing to recognition of pathogenic bacteria by the mucosal immune system. This is Solute carrier family 15 member 1 (Slc15a1) from Rattus norvegicus (Rat).